The chain runs to 272 residues: 3-methyl-2-oxobutanoate hydroxymethyltransferase (272 aa).

Mg(2+)-binding residues include Asp-51 and Asp-90. 3-methyl-2-oxobutanoate-binding positions include 51 to 52 (DS), Asp-90, and Lys-120. Glu-122 is a Mg(2+) binding site. Catalysis depends on Glu-189, which acts as the Proton acceptor.

The protein belongs to the PanB family. As to quaternary structure, homodecamer; pentamer of dimers. It depends on Mg(2+) as a cofactor.

It is found in the cytoplasm. It catalyses the reaction 3-methyl-2-oxobutanoate + (6R)-5,10-methylene-5,6,7,8-tetrahydrofolate + H2O = 2-dehydropantoate + (6S)-5,6,7,8-tetrahydrofolate. Its pathway is cofactor biosynthesis; (R)-pantothenate biosynthesis; (R)-pantoate from 3-methyl-2-oxobutanoate: step 1/2. Its function is as follows. Catalyzes the reversible reaction in which hydroxymethyl group from 5,10-methylenetetrahydrofolate is transferred onto alpha-ketoisovalerate to form ketopantoate. This chain is 3-methyl-2-oxobutanoate hydroxymethyltransferase, found in Syntrophus aciditrophicus (strain SB).